We begin with the raw amino-acid sequence, 1564 residues long: MSSKEVKTALKSARDAIRNKEYKEALKHCKTVLKQEKNNYNAWVFIGVAAAELEQPDQAQSAYKKAAELEPDQLLAWQGLANLYEKYNHINAKDDLPGVYQKLLDLYESVDKQKWCDVCKKLVDLYYQEKKHLEVARTWHKLIKTRQEQGAENEELHQLWRKLTQFLAESTEDQNNETQQLLFTAFENALGLSDKIPSEDHQVLYRHFIQSLSKFPHESARLKKACEGMINIYPTVQYPLEVLCLHLIESGNLTDEGQQYCCRLVEMDSKSGPGLIGLGIKALQDKKYEDAVRNLTEGLKESPVCTSGWYHLAEAQVKMHRPKEAVLSCSQALKIVDNLGASGNSLYQRNLCLHLKAEALIKLSDYDSSEEAIRTLDQISDADNIPGLLVLKSLAYRNKGSFDEAAKIMEDLLSSYPDLAEVHALEALIHFTKKDYLQAEKCFQRALEKDTEVAEYHYQLGLTYWFMGEETRKDKTKALTHFLKAARLDTYMGKVFCYLGHYYRDVVGDKNRARGCYRKAFELDDTDAESGAAAVDLSVELEDMEMALAILTTVTQKASAGTAKWAWLRRGLYYLKAGQHSQAVADLQAALRADPKDFNCWESLGEAYLSRGGYTTALKSFTKASELNPESIYSVFKVAAIQQILGKYKEAVAQYQMIIKKKEDYVPALKGLGECHLMMAKAALVDYLDGKAVDYIEKALEYFTCALQHRADVSCLWKLAGDACTCLYAVAPSKVNVHVLGVLLGQKEGKQVLKKNELLHLGGRCYGRALKLMSTSNTWCDLGINYYRQAQHLAETGSNMNDLKELLEKSLHCLKKAVRLDSNNHLYWNALGVVACYSGIGNYALAQHCFIKSIQSEQINAVAWTNLGVLYLTNENIEQAHEAFKMAQSLDPSYLMCWIGQALIAEAVGSYDTMDLFRHTTELNMHTEGALGYAYWVCTTLQDKSNRETELYQYNILQMNAIPAAQVILNKYVERIQNYAPAFTMLGYLNEHLQLKKEAANAYQRAILLLQTAEDQDTYNVAIRNYGRLLCSTGEYDKAIQAFKSTPLEVLEDIIGFALALFMKGLYKESSKAYERALSIVESEQDKAHILTALAITEYKQGKTDVAKTLLFKCSILKEPTTESLQALCALGLAMQDATLSKAALNELLKHIKHKDSNYQRCLLTSAIYALQGRSVAVQKQISKAVHSNPGDPALWSLLSRVVAQYAQRNAKGGVVAGNVAHILDSNHGKKALLYTAVNQLAMGSSSAEDEKNTALKTIQKAALLSPGDPAIWAGLMAACHADDKLALVNNTQPKRIDLYLALLSAVSASIKDEKFFENYNQSLEKWSLSQAVTGLIDTGRISEAETLCTKNLKSNPDQPAVILLLRQVQCKPLLESQKPLPDAVLEELQKTVMSNSTSVPAWQWLAHVYQSQGMMRAAEMCYRKSLQLASQRGSWSGKLSSLLRLALLALKVCMANISNDHWPSLVQEATTEALKLCFCPLAVLLQALLQFKRKMGARETRRLLERVVYQPGYPKSIASTARWYLLRHLYAKDDYELIDVLVNNAKTHGDTRALELNQRLSSQ.

Ser-2 is subject to N-acetylserine. TPR repeat units lie at residues 6–39 (VKTA…EKNN), 40–73 (YNAW…EPDQ), 272–305 (GPGL…SPVC), 307–339 (SGWY…VDNL), 386–419 (PGLL…YPDL), 420–453 (AEVH…DTEV), 455–492 (EYHY…DTYM), 493–527 (GKVF…DDTD), 564–597 (KWAW…DPKD), 598–631 (FNCW…NPES), 633–665 (YSVF…KEDY), 679–713 (MAKA…RADV), 790–824 (AQHL…DSNN), 826–860 (LYWN…EQIN), 861–894 (AVAW…DPSY), 980–1013 (APAF…LQTA), 1020–1054 (NVAI…LEDI), 1056–1084 (GFAL…VESE), 1326–1359 (KWSL…NPDQ), and 1400–1433 (VPAW…ASQR).

The protein belongs to the SKI3 family. Component of the SKI complex which consists of SKIC2, SKIC3 and SKIC8. Interacts with PAF1. Widely expressed with the highest levels observed in vascular tissues, lymph node, pituitary, lung and intestine. Not expressed in the liver.

The protein localises to the cytoplasm. The protein resides in the nucleus. Component of the SKI complex, a multiprotein complex that assists the RNA-degrading exosome during the mRNA decay and quality-control pathways. The SKI complex catalyzes mRNA extraction from 80S ribosomal complexes in the 3'-5' direction and channels mRNA to the cytosolic exosome for degradation. SKI-mediated extraction of mRNA from stalled ribosomes allow binding of the Pelota-HBS1L complex and subsequent ribosome disassembly by ABCE1 for ribosome recycling. In the nucleus, the SKI complex associates with transcriptionally active genes in a manner dependent on PAF1 complex (PAF1C). The sequence is that of Superkiller complex protein 3 from Homo sapiens (Human).